The sequence spans 158 residues: 6,7-dimethyl-8-ribityllumazine synthase (158 aa).

Residues phenylalanine 24, 58–60, and 82–84 each bind 5-amino-6-(D-ribitylamino)uracil; these read AFE and AVI. 87–88 contacts (2S)-2-hydroxy-3-oxobutyl phosphate; the sequence is GT. Residue histidine 90 is the Proton donor of the active site. 5-amino-6-(D-ribitylamino)uracil is bound at residue phenylalanine 115. Arginine 129 provides a ligand contact to (2S)-2-hydroxy-3-oxobutyl phosphate.

It belongs to the DMRL synthase family. In terms of assembly, forms an icosahedral capsid composed of 60 subunits, arranged as a dodecamer of pentamers.

It carries out the reaction (2S)-2-hydroxy-3-oxobutyl phosphate + 5-amino-6-(D-ribitylamino)uracil = 6,7-dimethyl-8-(1-D-ribityl)lumazine + phosphate + 2 H2O + H(+). The protein operates within cofactor biosynthesis; riboflavin biosynthesis; riboflavin from 2-hydroxy-3-oxobutyl phosphate and 5-amino-6-(D-ribitylamino)uracil: step 1/2. Catalyzes the formation of 6,7-dimethyl-8-ribityllumazine by condensation of 5-amino-6-(D-ribitylamino)uracil with 3,4-dihydroxy-2-butanone 4-phosphate. This is the penultimate step in the biosynthesis of riboflavin. The protein is 6,7-dimethyl-8-ribityllumazine synthase of Pseudomonas putida (strain GB-1).